Reading from the N-terminus, the 466-residue chain is Cysteine--tRNA ligase (466 aa).

Zn(2+) is bound at residue C29. The short motif at 31 to 41 (PTVYNYIHIGN) is the 'HIGH' region element. Residues C209, H234, and E238 each coordinate Zn(2+). The short motif at 266 to 270 (KMSKS) is the 'KMSKS' region element. Position 269 (K269) interacts with ATP. Position 270 is a phosphoserine (S270).

The protein belongs to the class-I aminoacyl-tRNA synthetase family. In terms of assembly, monomer. The cofactor is Zn(2+).

It localises to the cytoplasm. The catalysed reaction is tRNA(Cys) + L-cysteine + ATP = L-cysteinyl-tRNA(Cys) + AMP + diphosphate. The protein is Cysteine--tRNA ligase of Bacillus pumilus (strain SAFR-032).